The chain runs to 420 residues: Glucose-1-phosphate adenylyltransferase (420 aa).

Alpha-D-glucose 1-phosphate-binding positions include Y107, G172, 187–188 (EK), and S205.

This sequence belongs to the bacterial/plant glucose-1-phosphate adenylyltransferase family. Homotetramer.

It catalyses the reaction alpha-D-glucose 1-phosphate + ATP + H(+) = ADP-alpha-D-glucose + diphosphate. Its pathway is glycan biosynthesis; glycogen biosynthesis. Functionally, involved in the biosynthesis of ADP-glucose, a building block required for the elongation reactions to produce glycogen. Catalyzes the reaction between ATP and alpha-D-glucose 1-phosphate (G1P) to produce pyrophosphate and ADP-Glc. This chain is Glucose-1-phosphate adenylyltransferase, found in Rhizobium meliloti (strain 1021) (Ensifer meliloti).